We begin with the raw amino-acid sequence, 91 residues long: UPF0223 protein SACOL1106 (91 aa).

Belongs to the UPF0223 family.

The sequence is that of UPF0223 protein SACOL1106 from Staphylococcus aureus (strain COL).